The primary structure comprises 293 residues: ATP synthase gamma chain (293 aa).

The protein belongs to the ATPase gamma chain family. As to quaternary structure, F-type ATPases have 2 components, CF(1) - the catalytic core - and CF(0) - the membrane proton channel. CF(1) has five subunits: alpha(3), beta(3), gamma(1), delta(1), epsilon(1). CF(0) has three main subunits: a, b and c.

It is found in the cell inner membrane. Produces ATP from ADP in the presence of a proton gradient across the membrane. The gamma chain is believed to be important in regulating ATPase activity and the flow of protons through the CF(0) complex. This chain is ATP synthase gamma chain, found in Gluconacetobacter diazotrophicus (strain ATCC 49037 / DSM 5601 / CCUG 37298 / CIP 103539 / LMG 7603 / PAl5).